The following is a 60-amino-acid chain: Protein translocase subunit SecE (60 aa).

A helical transmembrane segment spans residues 37–57 (LLGFALVGGIGYLIHLGYIIL).

The protein belongs to the SecE/SEC61-gamma family. As to quaternary structure, component of the Sec protein translocase complex. Heterotrimer consisting of SecY (alpha), SecG (beta) and SecE (gamma) subunits. The heterotrimers can form oligomers, although 1 heterotrimer is thought to be able to translocate proteins. Interacts with the ribosome. May interact with SecDF, and other proteins may be involved.

The protein resides in the cell membrane. In terms of biological role, essential subunit of the Sec protein translocation channel SecYEG. Clamps together the 2 halves of SecY. May contact the channel plug during translocation. The sequence is that of Protein translocase subunit SecE from Aeropyrum pernix (strain ATCC 700893 / DSM 11879 / JCM 9820 / NBRC 100138 / K1).